The sequence spans 61 residues: Phospholipase A2 (61 aa).

Residues Y27, G29, and G31 each coordinate Ca(2+). Cysteines 28 and 35 form a disulfide. Residue H38 is part of the active site. Residue D39 participates in Ca(2+) binding. Cysteines 41 and 59 form a disulfide. Residue D60 is part of the active site.

This sequence belongs to the phospholipase A2 family. Group II subfamily. D49 sub-subfamily. As to quaternary structure, homodimer. Requires Ca(2+) as cofactor. Expressed by the venom gland.

The protein resides in the secreted. The enzyme catalyses a 1,2-diacyl-sn-glycero-3-phosphocholine + H2O = a 1-acyl-sn-glycero-3-phosphocholine + a fatty acid + H(+). Snake venom phospholipase A2 (PLA2) that displays edema-inducing activities. PLA2 catalyzes the calcium-dependent hydrolysis of the 2-acyl groups in 3-sn-phosphoglycerides. The sequence is that of Phospholipase A2 from Crotalus atrox (Western diamondback rattlesnake).